We begin with the raw amino-acid sequence, 477 residues long: Trigger factor (477 aa).

Residues 169 to 254 (EDRVTIDYLG…VKEVAKPNEL (86 aa)) form the PPIase FKBP-type domain. Positions 435–477 (VSKEELTAEDEDAASEAKPAKKAAPKKKAAPKKKADEGKSEEA) are disordered. The segment covering 454–466 (AKKAAPKKKAAPK) has biased composition (basic residues). The span at 467–477 (KKADEGKSEEA) shows a compositional bias: basic and acidic residues.

The protein belongs to the FKBP-type PPIase family. Tig subfamily.

It localises to the cytoplasm. The catalysed reaction is [protein]-peptidylproline (omega=180) = [protein]-peptidylproline (omega=0). Functionally, involved in protein export. Acts as a chaperone by maintaining the newly synthesized protein in an open conformation. Functions as a peptidyl-prolyl cis-trans isomerase. The polypeptide is Trigger factor (Brucella anthropi (strain ATCC 49188 / DSM 6882 / CCUG 24695 / JCM 21032 / LMG 3331 / NBRC 15819 / NCTC 12168 / Alc 37) (Ochrobactrum anthropi)).